Reading from the N-terminus, the 216-residue chain is Urease accessory protein UreG (216 aa).

A GTP-binding site is contributed by 24 to 31 (GPVGSGKT).

It belongs to the SIMIBI class G3E GTPase family. UreG subfamily. Homodimer. UreD, UreF and UreG form a complex that acts as a GTP-hydrolysis-dependent molecular chaperone, activating the urease apoprotein by helping to assemble the nickel containing metallocenter of UreC. The UreE protein probably delivers the nickel.

It localises to the cytoplasm. Its function is as follows. Facilitates the functional incorporation of the urease nickel metallocenter. This process requires GTP hydrolysis, probably effectuated by UreG. In Variovorax paradoxus (strain S110), this protein is Urease accessory protein UreG.